We begin with the raw amino-acid sequence, 2376 residues long: Protein Ycf2 (2376 aa).

Disordered stretches follow at residues 173–194, 226–256, and 952–1011; these read SSQL…GTED, TEIE…EMNN, and KRKK…KRKE. The segment covering 235–245 has biased composition (low complexity); that stretch reads KGLSGSSSKSR. 2 stretches are compositionally biased toward basic and acidic residues: residues 246–255 and 960–1009; these read LFTEGEKEMN and KRKE…PEKR. Position 1441 to 1448 (1441 to 1448) interacts with ATP; it reads GSIGSGRS. Disordered regions lie at residues 1515–1534, 1860–2046, and 2112–2230; these read YEDR…DYEP, LVGS…LRPK, and PAEE…DGFS. Acidic residues predominate over residues 1866 to 2025; the sequence is TEEEVEGTEE…GEGTEDEEGE (160 aa). Basic and acidic residues predominate over residues 2026–2038; sequence GTEKDSSQFDNDR. Composition is skewed to acidic residues over residues 2112–2129 and 2136–2213; these read PAEE…EALE and GEEE…ENDS.

It belongs to the Ycf2 family.

It is found in the plastid. It localises to the chloroplast stroma. Its function is as follows. Probable ATPase of unknown function. Its presence in a non-photosynthetic plant (Epifagus virginiana) and experiments in tobacco indicate that it has an essential function which is probably not related to photosynthesis. This is Protein Ycf2 from Oenothera glazioviana (Large-flowered evening primrose).